The sequence spans 109 residues: uncharacterized protein (109 aa).

Residues 1–28 (MNMLAYFLYCRQLLLAVVLIEFPPRLCG) form the signal peptide.

This is an uncharacterized protein from Homo sapiens (Human).